Here is a 109-residue protein sequence, read N- to C-terminus: Spermidine export protein MdtI (109 aa).

4 helical membrane-spanning segments follow: residues Phe-6–Leu-26, Val-35–Ala-55, Ala-64–Phe-84, and Leu-88–Leu-108.

The protein belongs to the drug/metabolite transporter (DMT) superfamily. Small multidrug resistance (SMR) (TC 2.A.7.1) family. MdtI subfamily. In terms of assembly, forms a complex with MdtJ.

It localises to the cell inner membrane. Catalyzes the excretion of spermidine. In Yersinia enterocolitica serotype O:8 / biotype 1B (strain NCTC 13174 / 8081), this protein is Spermidine export protein MdtI.